The following is a 224-amino-acid chain: tRNA (guanine-N(7)-)-methyltransferase (224 aa).

4 residues coordinate S-adenosyl-L-methionine: Glu45, Glu70, Asp97, and Asp119. Residue Asp119 is part of the active site. Residues Lys123, Asp155, and 199–202 contribute to the substrate site; that span reads TEYE.

It belongs to the class I-like SAM-binding methyltransferase superfamily. TrmB family.

It catalyses the reaction guanosine(46) in tRNA + S-adenosyl-L-methionine = N(7)-methylguanosine(46) in tRNA + S-adenosyl-L-homocysteine. It functions in the pathway tRNA modification; N(7)-methylguanine-tRNA biosynthesis. Its function is as follows. Catalyzes the formation of N(7)-methylguanine at position 46 (m7G46) in tRNA. This chain is tRNA (guanine-N(7)-)-methyltransferase, found in Ureaplasma urealyticum serovar 10 (strain ATCC 33699 / Western).